Reading from the N-terminus, the 350-residue chain is S-adenosylmethionine:tRNA ribosyltransferase-isomerase (350 aa).

Belongs to the QueA family. As to quaternary structure, monomer.

The protein resides in the cytoplasm. It catalyses the reaction 7-aminomethyl-7-carbaguanosine(34) in tRNA + S-adenosyl-L-methionine = epoxyqueuosine(34) in tRNA + adenine + L-methionine + 2 H(+). It functions in the pathway tRNA modification; tRNA-queuosine biosynthesis. Its function is as follows. Transfers and isomerizes the ribose moiety from AdoMet to the 7-aminomethyl group of 7-deazaguanine (preQ1-tRNA) to give epoxyqueuosine (oQ-tRNA). This Aliivibrio salmonicida (strain LFI1238) (Vibrio salmonicida (strain LFI1238)) protein is S-adenosylmethionine:tRNA ribosyltransferase-isomerase.